The primary structure comprises 469 residues: Protein YfjI (469 aa).

This is Protein YfjI (yfjI) from Escherichia coli (strain K12).